We begin with the raw amino-acid sequence, 359 residues long: Bergaptol O-methyltransferase (359 aa).

Residue His126 participates in bergaptol binding. Residues Ser179, Gly203, Asp226, Asp246, and Lys260 each coordinate S-adenosyl-L-homocysteine. His264 lines the bergaptol pocket. His264 acts as the Proton acceptor in catalysis.

Belongs to the class I-like SAM-binding methyltransferase superfamily. Cation-independent O-methyltransferase family. COMT subfamily.

The enzyme catalyses a 5-hydroxyfurocoumarin + S-adenosyl-L-methionine = a 5-methoxyfurocoumarin + S-adenosyl-L-homocysteine + H(+). It carries out the reaction bergaptol + S-adenosyl-L-methionine = bergapten + S-adenosyl-L-homocysteine. Its activity is regulated as follows. Inhibited by Cu(2+), Ni(2+) and Co(2+). This is Bergaptol O-methyltransferase from Glehnia littoralis (Beach silvertop).